Consider the following 444-residue polypeptide: Homogentisate 1,2-dioxygenase (444 aa).

His298 acts as the Proton acceptor in catalysis. His341 and Glu347 together coordinate Fe cation. Positions 356 and 377 each coordinate homogentisate. His377 is a binding site for Fe cation.

It belongs to the homogentisate dioxygenase family. In terms of assembly, hexamer; dimer of trimers. Requires Fe cation as cofactor.

It carries out the reaction homogentisate + O2 = 4-maleylacetoacetate + H(+). Its pathway is amino-acid degradation; L-phenylalanine degradation; acetoacetate and fumarate from L-phenylalanine: step 4/6. Functionally, involved in the catabolism of homogentisate (2,5-dihydroxyphenylacetate or 2,5-OH-PhAc), a central intermediate in the degradation of phenylalanine and tyrosine. Catalyzes the oxidative ring cleavage of the aromatic ring of homogentisate to yield maleylacetoacetate. The polypeptide is Homogentisate 1,2-dioxygenase (Burkholderia ambifaria (strain MC40-6)).